We begin with the raw amino-acid sequence, 318 residues long: Electron transfer flavoprotein subunit alpha (318 aa).

Residue 257 to 285 (LYIALGISGAIQHRAGMQTSKTIVAVNKD) coordinates FAD.

This sequence belongs to the ETF alpha-subunit/FixB family. In terms of assembly, heterodimer of an alpha and a beta subunit. Requires FAD as cofactor.

Its function is as follows. The electron transfer flavoprotein serves as a specific electron acceptor for other dehydrogenases. It transfers the electrons to the main respiratory chain via ETF-ubiquinone oxidoreductase (ETF dehydrogenase). The polypeptide is Electron transfer flavoprotein subunit alpha (etfA) (Mycobacterium leprae (strain TN)).